Here is a 787-residue protein sequence, read N- to C-terminus: Endonuclease MutS2 (787 aa).

Residue 331-338 (GPNTGGKT) participates in ATP binding. The 76-residue stretch at 711 to 786 (IDVRGKTSDD…EQGVTIVELR (76 aa)) folds into the Smr domain.

The protein belongs to the DNA mismatch repair MutS family. MutS2 subfamily. As to quaternary structure, homodimer. Binds to stalled ribosomes, contacting rRNA.

Functionally, endonuclease that is involved in the suppression of homologous recombination and thus may have a key role in the control of bacterial genetic diversity. Acts as a ribosome collision sensor, splitting the ribosome into its 2 subunits. Detects stalled/collided 70S ribosomes which it binds and splits by an ATP-hydrolysis driven conformational change. Acts upstream of the ribosome quality control system (RQC), a ribosome-associated complex that mediates the extraction of incompletely synthesized nascent chains from stalled ribosomes and their subsequent degradation. Probably generates substrates for RQC. This Caldicellulosiruptor saccharolyticus (strain ATCC 43494 / DSM 8903 / Tp8T 6331) protein is Endonuclease MutS2.